Reading from the N-terminus, the 244-residue chain is 5-oxoprolinase subunit A (244 aa).

It belongs to the LamB/PxpA family. In terms of assembly, forms a complex composed of PxpA, PxpB and PxpC.

The enzyme catalyses 5-oxo-L-proline + ATP + 2 H2O = L-glutamate + ADP + phosphate + H(+). Its function is as follows. Catalyzes the cleavage of 5-oxoproline to form L-glutamate coupled to the hydrolysis of ATP to ADP and inorganic phosphate. The chain is 5-oxoprolinase subunit A from Salmonella typhimurium (strain LT2 / SGSC1412 / ATCC 700720).